Here is a 116-residue protein sequence, read N- to C-terminus: Hydrogenase maturation factor HypA (116 aa).

His2 lines the Ni(2+) pocket. 4 residues coordinate Zn(2+): Cys73, Cys76, Cys90, and Cys93.

It belongs to the HypA/HybF family.

Involved in the maturation of [NiFe] hydrogenases. Required for nickel insertion into the metal center of the hydrogenase. The sequence is that of Hydrogenase maturation factor HypA from Escherichia coli O6:H1 (strain CFT073 / ATCC 700928 / UPEC).